A 369-amino-acid polypeptide reads, in one-letter code: Sesquiterpene cyclase hepA (369 aa).

D100, N248, S252, and D256 together coordinate Mg(2+). Positions 100–104 (DDEID) match the DDXXD motif motif. The (N,D)D(L,I,V)X(S,T)XXXE motif signature appears at 255–262 (NDLLSLRK).

Belongs to the terpene synthase family. It depends on Mg(2+) as a cofactor.

Its function is as follows. Sesquiterpene cyclase; part of the gene cluster that mediates the biosynthesis of heptelidic acid (HA), a sesquiterpene lactone that acts as an inhibitor of glyceraldehyde-3-phosphatedehydrogenase (GAPDH) and a growth inhibitor of the salt-tolerant lactic acid bacteria in soy sauce brewing. The chain is Sesquiterpene cyclase hepA from Aspergillus oryzae (strain ATCC 42149 / RIB 40) (Yellow koji mold).